The following is a 417-amino-acid chain: UDP-N-acetylmuramoylalanine--D-glutamate ligase (417 aa).

Residue 101–107 (GTAGKTS) coordinates ATP.

Belongs to the MurCDEF family.

The protein resides in the cytoplasm. It carries out the reaction UDP-N-acetyl-alpha-D-muramoyl-L-alanine + D-glutamate + ATP = UDP-N-acetyl-alpha-D-muramoyl-L-alanyl-D-glutamate + ADP + phosphate + H(+). Its pathway is cell wall biogenesis; peptidoglycan biosynthesis. In terms of biological role, cell wall formation. Catalyzes the addition of glutamate to the nucleotide precursor UDP-N-acetylmuramoyl-L-alanine (UMA). This is UDP-N-acetylmuramoylalanine--D-glutamate ligase from Thermus thermophilus (strain ATCC BAA-163 / DSM 7039 / HB27).